A 304-amino-acid chain; its full sequence is UDP-3-O-acyl-N-acetylglucosamine deacetylase (304 aa).

Zn(2+)-binding residues include His79, His238, and Asp242. His265 (proton donor) is an active-site residue.

Belongs to the LpxC family. Requires Zn(2+) as cofactor.

The catalysed reaction is a UDP-3-O-[(3R)-3-hydroxyacyl]-N-acetyl-alpha-D-glucosamine + H2O = a UDP-3-O-[(3R)-3-hydroxyacyl]-alpha-D-glucosamine + acetate. The protein operates within glycolipid biosynthesis; lipid IV(A) biosynthesis; lipid IV(A) from (3R)-3-hydroxytetradecanoyl-[acyl-carrier-protein] and UDP-N-acetyl-alpha-D-glucosamine: step 2/6. In terms of biological role, catalyzes the hydrolysis of UDP-3-O-myristoyl-N-acetylglucosamine to form UDP-3-O-myristoylglucosamine and acetate, the committed step in lipid A biosynthesis. This Pseudoalteromonas atlantica (strain T6c / ATCC BAA-1087) protein is UDP-3-O-acyl-N-acetylglucosamine deacetylase.